The chain runs to 55 residues: Large ribosomal subunit protein bL33 (55 aa).

The segment covering 1–11 has biased composition (basic and acidic residues); sequence MAKGSREKIKL. A disordered region spans residues 1–32; sequence MAKGSREKIKLESSASTGHFYTTSKNKRTKPE. Positions 13–24 are enriched in polar residues; the sequence is SSASTGHFYTTS.

Belongs to the bacterial ribosomal protein bL33 family.

The sequence is that of Large ribosomal subunit protein bL33 from Polynucleobacter necessarius subsp. necessarius (strain STIR1).